Reading from the N-terminus, the 245-residue chain is Phosphoribosyl isomerase A (245 aa).

Catalysis depends on Asp11, which acts as the Proton acceptor. Asp130 serves as the catalytic Proton donor.

The protein belongs to the HisA/HisF family.

It is found in the cytoplasm. It carries out the reaction 1-(5-phospho-beta-D-ribosyl)-5-[(5-phospho-beta-D-ribosylamino)methylideneamino]imidazole-4-carboxamide = 5-[(5-phospho-1-deoxy-D-ribulos-1-ylimino)methylamino]-1-(5-phospho-beta-D-ribosyl)imidazole-4-carboxamide. The catalysed reaction is N-(5-phospho-beta-D-ribosyl)anthranilate = 1-(2-carboxyphenylamino)-1-deoxy-D-ribulose 5-phosphate. It participates in amino-acid biosynthesis; L-histidine biosynthesis; L-histidine from 5-phospho-alpha-D-ribose 1-diphosphate: step 4/9. The protein operates within amino-acid biosynthesis; L-tryptophan biosynthesis; L-tryptophan from chorismate: step 3/5. Functionally, involved in both the histidine and tryptophan biosynthetic pathways. This chain is Phosphoribosyl isomerase A (priA), found in Mycobacterium bovis (strain ATCC BAA-935 / AF2122/97).